The following is a 668-amino-acid chain: tRNA 5-methylaminomethyl-2-thiouridine biosynthesis bifunctional protein MnmC (668 aa).

The tRNA (mnm(5)s(2)U34)-methyltransferase stretch occupies residues 1 to 245 (MKHYSIQPAN…KREMLCGVME (245 aa)). Residues 270-668 (IGGGIACALL…LLKGKAVKAG (399 aa)) are FAD-dependent cmnm(5)s(2)U34 oxidoreductase.

It in the N-terminal section; belongs to the methyltransferase superfamily. tRNA (mnm(5)s(2)U34)-methyltransferase family. This sequence in the C-terminal section; belongs to the DAO family. It depends on FAD as a cofactor.

It localises to the cytoplasm. It carries out the reaction 5-aminomethyl-2-thiouridine(34) in tRNA + S-adenosyl-L-methionine = 5-methylaminomethyl-2-thiouridine(34) in tRNA + S-adenosyl-L-homocysteine + H(+). Catalyzes the last two steps in the biosynthesis of 5-methylaminomethyl-2-thiouridine (mnm(5)s(2)U) at the wobble position (U34) in tRNA. Catalyzes the FAD-dependent demodification of cmnm(5)s(2)U34 to nm(5)s(2)U34, followed by the transfer of a methyl group from S-adenosyl-L-methionine to nm(5)s(2)U34, to form mnm(5)s(2)U34. In Shigella boydii serotype 4 (strain Sb227), this protein is tRNA 5-methylaminomethyl-2-thiouridine biosynthesis bifunctional protein MnmC.